Consider the following 398-residue polypeptide: Enoyl-[acyl-carrier-protein] reductase [NADH] (398 aa).

NAD(+) is bound by residues 48–53 (GSSTGY), 74–75 (FE), 111–112 (DA), and 139–140 (LA). Residue Tyr225 coordinates substrate. Tyr235 functions as the Proton donor in the catalytic mechanism. Residues Lys244 and 273 to 275 (VVT) each bind NAD(+).

The protein belongs to the TER reductase family. In terms of assembly, monomer.

It carries out the reaction a 2,3-saturated acyl-[ACP] + NAD(+) = a (2E)-enoyl-[ACP] + NADH + H(+). It participates in lipid metabolism; fatty acid biosynthesis. Involved in the final reduction of the elongation cycle of fatty acid synthesis (FAS II). Catalyzes the reduction of a carbon-carbon double bond in an enoyl moiety that is covalently linked to an acyl carrier protein (ACP). This Pseudomonas paraeruginosa (strain DSM 24068 / PA7) (Pseudomonas aeruginosa (strain PA7)) protein is Enoyl-[acyl-carrier-protein] reductase [NADH].